We begin with the raw amino-acid sequence, 555 residues long: Transcription factor kojR (555 aa).

The zn(2)-C6 fungal-type DNA-binding region spans 21–47 (CETCKLRKRKCDGHEPCTYCLRYEYQC). Residues 51–73 (PHPRRKPAASKSSARPSEEEDSP) form a disordered region.

The protein resides in the nucleus. Its function is as follows. Transcription factor that regulates the gene cluster that mediates the biosynthesis of 5-hydroxy-2-hydroxymethyl-1,4-pyrone, also know as kojic acid, a by-product in the fermentation process of malting rice that acts as a chelation agent. Mediates the expression of kojA and kojT via binding of an 11-nucleotide palindromic sequence, 5'-CGRCTWAGYCG-3' (R=A/G, W=A/T, Y=C/T) within the target gene promoters. The sequence is that of Transcription factor kojR from Aspergillus flavus (strain ATCC 200026 / FGSC A1120 / IAM 13836 / NRRL 3357 / JCM 12722 / SRRC 167).